The sequence spans 643 residues: 1-deoxy-D-xylulose-5-phosphate synthase (643 aa).

Residues His-72 and 113-115 each bind thiamine diphosphate; that span reads GHA. Asp-144 is a binding site for Mg(2+). Thiamine diphosphate is bound by residues 145-146, Asn-174, Tyr-287, and Glu-370; that span reads GA. A Mg(2+)-binding site is contributed by Asn-174.

This sequence belongs to the transketolase family. DXPS subfamily. In terms of assembly, homodimer. The cofactor is Mg(2+). It depends on thiamine diphosphate as a cofactor.

It carries out the reaction D-glyceraldehyde 3-phosphate + pyruvate + H(+) = 1-deoxy-D-xylulose 5-phosphate + CO2. Its pathway is metabolic intermediate biosynthesis; 1-deoxy-D-xylulose 5-phosphate biosynthesis; 1-deoxy-D-xylulose 5-phosphate from D-glyceraldehyde 3-phosphate and pyruvate: step 1/1. In terms of biological role, catalyzes the acyloin condensation reaction between C atoms 2 and 3 of pyruvate and glyceraldehyde 3-phosphate to yield 1-deoxy-D-xylulose-5-phosphate (DXP). This is 1-deoxy-D-xylulose-5-phosphate synthase from Prochlorococcus marinus (strain MIT 9211).